Consider the following 217-residue polypeptide: Phosphatidylcholine synthase (217 aa).

The chain crosses the membrane as a helical span at residues 1–8; that stretch reads ACIGVFSL. At 9–16 the chain is on the periplasmic side; the sequence is VKIYQHEY. A helical membrane pass occupies residues 17–37; the sequence is IFALWLMFITVVIDAVDGTLA. The Cytoplasmic segment spans residues 38-50; that stretch reads RLVNIKKILPKID. A helical membrane pass occupies residues 51–71; it reads GALLDNIVDYLNYVITPCFFL. The Periplasmic portion of the chain corresponds to 72–77; it reads LVKPGM. The chain crosses the membrane as a helical span at residues 78–98; the sequence is LPPEYSVFLIAAVSITSAYQF. The Cytoplasmic portion of the chain corresponds to 99-107; the sequence is CQCDAKTPD. A helical membrane pass occupies residues 108 to 128; that stretch reads HFFKGFPCYWNITILYMFIFN. Residue Thr-129 is a topological domain, periplasmic. Residues 130-149 form a helical membrane-spanning segment; it reads SAATNAIILIILSILIFVPV. The Cytoplasmic portion of the chain corresponds to 150–164; the sequence is KYVYPSRLDYLTESR. Residues 165 to 185 form a helical membrane-spanning segment; sequence ILKILMHICSIIYAVSSICIL. The Periplasmic portion of the chain corresponds to 186-191; the sequence is ISYPNT. The chain crosses the membrane as a helical span at residues 192-212; the sequence is NIICLSLSVAYVGMYLFLSFY. Residues 213–217 are Cytoplasmic-facing; the sequence is RTYYP.

It belongs to the CDP-alcohol phosphatidyltransferase class-I family. The cofactor is Mn(2+).

It localises to the cell inner membrane. It catalyses the reaction a CDP-1,2-diacyl-sn-glycerol + choline = a 1,2-diacyl-sn-glycero-3-phosphocholine + CMP + H(+). Its function is as follows. Condenses choline with CDP-diglyceride to produce phosphatidylcholine and CMP. In Legionella bozemanae (Fluoribacter bozemanae), this protein is Phosphatidylcholine synthase.